Here is a 232-residue protein sequence, read N- to C-terminus: Homeobox protein SAX-1 (232 aa).

Disordered regions lie at residues 1-64, 122-150, and 185-208; these read CLPD…SCAK, KQHP…RPAA, and LLGA…LCPS. Residues 65 to 124 constitute a DNA-binding region (homeobox); that stretch reads PRRARTAFTYEQLVALENKFRATRYLSVCERLNLALSLSLTETQVKIWFQNRRTKWKKQH. Low complexity predominate over residues 126–142; sequence GADGAAAPAPPAAARCS.

The protein belongs to the NK-1 homeobox family. Transiently expressed in the birth zone of the whole spinal cord regardless of the axial level.

The protein resides in the nucleus. The protein is Homeobox protein SAX-1 (SAX1) of Gallus gallus (Chicken).